A 391-amino-acid chain; its full sequence is Na(+)/H(+) antiporter NhaA (391 aa).

11 helical membrane-spanning segments follow: residues 14–34, 47–67, 87–107, 117–137, 146–166, 171–191, 205–225, 252–272, 280–300, 318–338, and 356–376; these read AGGI…NSPL, FGMS…FLLI, IFPA…YVAF, GWAI…ALLG, VFLL…IALF, LSTM…MLNA, AILW…GVVI, VAFG…LEGV, MLPL…IFTF, FIHI…SIFI, and LGIL…LHFS.

This sequence belongs to the NhaA Na(+)/H(+) (TC 2.A.33) antiporter family.

The protein localises to the cell inner membrane. The enzyme catalyses Na(+)(in) + 2 H(+)(out) = Na(+)(out) + 2 H(+)(in). In terms of biological role, na(+)/H(+) antiporter that extrudes sodium in exchange for external protons. This Vibrio campbellii (strain ATCC BAA-1116) protein is Na(+)/H(+) antiporter NhaA.